A 280-amino-acid chain; its full sequence is Late embryogenesis abundant protein M17 (280 aa).

The N-terminal stretch at 1–22 (MGNLKSLVLLALLFSFSVAVFA) is a signal peptide. Asn-23 carries N-linked (GlcNAc...) asparagine glycosylation. A run of 2 repeats spans residues 76–97 (GGCR…CCRS) and 131–152 (GGCR…CCRS). The segment at 76–262 (GGCRWGCCGG…RGRCRYCCRS (187 aa)) is 4 X 22 AA repeats, Cys-rich. Residues 163–184 (VEPNDVEPQQGGRGGGGGGGGG) are disordered. The segment covering 173 to 184 (GGRGGGGGGGGG) has biased composition (gly residues). The stretch at 186 to 207 (GGCRWGCCGGWWRGRCRYCCRS) is repeat 3. The tract at residues 218–239 (VEPNDVEPQQGGRGGGGGGGGG) is disordered. Residues 228–239 (GGRGGGGGGGGG) are compositionally biased toward gly residues. Repeat 4 spans residues 241–262 (GGCRWGCCGGWWRGRCRYCCRS).

May be involved in the acquisition of desiccation tolerance during late phase of embryogenesis. The sequence is that of Late embryogenesis abundant protein M17 from Arabidopsis thaliana (Mouse-ear cress).